We begin with the raw amino-acid sequence, 119 residues long: Large ribosomal subunit protein bL17 (119 aa).

It belongs to the bacterial ribosomal protein bL17 family. In terms of assembly, part of the 50S ribosomal subunit. Contacts protein L32.

This is Large ribosomal subunit protein bL17 from Psychrobacter arcticus (strain DSM 17307 / VKM B-2377 / 273-4).